Reading from the N-terminus, the 42-residue chain is uncharacterized protein (42 aa).

Residues 5–27 (FLHTNITIIPHSVLYVSLSYYII) traverse the membrane as a helical segment.

The protein localises to the membrane. This is an uncharacterized protein from Saccharomyces cerevisiae (strain ATCC 204508 / S288c) (Baker's yeast).